We begin with the raw amino-acid sequence, 391 residues long: NAD(P)H-quinone oxidoreductase subunit H, chloroplastic (391 aa).

This sequence belongs to the complex I 49 kDa subunit family. NDH is composed of at least 16 different subunits, 5 of which are encoded in the nucleus.

The protein resides in the plastid. It is found in the chloroplast thylakoid membrane. The catalysed reaction is a plastoquinone + NADH + (n+1) H(+)(in) = a plastoquinol + NAD(+) + n H(+)(out). It catalyses the reaction a plastoquinone + NADPH + (n+1) H(+)(in) = a plastoquinol + NADP(+) + n H(+)(out). In terms of biological role, NDH shuttles electrons from NAD(P)H:plastoquinone, via FMN and iron-sulfur (Fe-S) centers, to quinones in the photosynthetic chain and possibly in a chloroplast respiratory chain. The immediate electron acceptor for the enzyme in this species is believed to be plastoquinone. Couples the redox reaction to proton translocation, and thus conserves the redox energy in a proton gradient. The chain is NAD(P)H-quinone oxidoreductase subunit H, chloroplastic from Nephroselmis olivacea (Green alga).